Here is a 552-residue protein sequence, read N- to C-terminus: Urocanate hydratase (552 aa).

Residues 49–50, Gln-127, 173–175, Asp-193, 239–240, 260–264, 270–271, and Tyr-319 contribute to the NAD(+) site; these read GG, GMG, NA, QTSAH, and YI. The active site involves Cys-407. Gly-489 contacts NAD(+).

This sequence belongs to the urocanase family. Requires NAD(+) as cofactor.

The protein localises to the cytoplasm. It carries out the reaction 4-imidazolone-5-propanoate = trans-urocanate + H2O. It participates in amino-acid degradation; L-histidine degradation into L-glutamate; N-formimidoyl-L-glutamate from L-histidine: step 2/3. Functionally, catalyzes the conversion of urocanate to 4-imidazolone-5-propionate. In Bacillus thuringiensis (strain Al Hakam), this protein is Urocanate hydratase.